The primary structure comprises 240 residues: Proteasome subunit beta type-1 (240 aa).

N-acetylmethionine is present on Met-1. Residues 1 to 27 (MLSTAAYRDVERELGMGPHGSAGPVQL) constitute a propeptide that is removed on maturation. O-linked (GlcNAc) serine glycosylation occurs at Ser-57. Ser-61 and Ser-67 each carry phosphoserine. Phosphotyrosine is present on Tyr-149. Ser-161 carries the post-translational modification Phosphoserine. Position 203 is an N6-acetyllysine (Lys-203). A glycan (O-linked (GlcNAc) serine) is linked at Ser-208.

The protein belongs to the peptidase T1B family. As to quaternary structure, the 26S proteasome consists of a 20S proteasome core and two 19S regulatory subunits. The 20S proteasome core is a barrel-shaped complex made of 28 subunits that are arranged in four stacked rings. The two outer rings are each formed by seven alpha subunits, and the two inner rings are formed by seven beta subunits. The proteolytic activity is exerted by three beta-subunits PSMB5, PSMB6 and PSMB7. Interacts with SERPINB2. Interacts with RFPL4A. As to expression, detected in liver (at protein level).

Its subcellular location is the cytoplasm. It localises to the nucleus. Non-catalytic component of the 20S core proteasome complex involved in the proteolytic degradation of most intracellular proteins. This complex plays numerous essential roles within the cell by associating with different regulatory particles. Associated with two 19S regulatory particles, forms the 26S proteasome and thus participates in the ATP-dependent degradation of ubiquitinated proteins. The 26S proteasome plays a key role in the maintenance of protein homeostasis by removing misfolded or damaged proteins that could impair cellular functions, and by removing proteins whose functions are no longer required. Associated with the PA200 or PA28, the 20S proteasome mediates ubiquitin-independent protein degradation. This type of proteolysis is required in several pathways including spermatogenesis (20S-PA200 complex) or generation of a subset of MHC class I-presented antigenic peptides (20S-PA28 complex). This Mus musculus (Mouse) protein is Proteasome subunit beta type-1 (Psmb1).